The sequence spans 125 residues: Small ribosomal subunit protein uS13 (125 aa).

Residues Gly-95–Lys-125 form a disordered region.

It belongs to the universal ribosomal protein uS13 family. Part of the 30S ribosomal subunit. Forms a loose heterodimer with protein S19. Forms two bridges to the 50S subunit in the 70S ribosome.

Its function is as follows. Located at the top of the head of the 30S subunit, it contacts several helices of the 16S rRNA. In the 70S ribosome it contacts the 23S rRNA (bridge B1a) and protein L5 of the 50S subunit (bridge B1b), connecting the 2 subunits; these bridges are implicated in subunit movement. Contacts the tRNAs in the A and P-sites. The polypeptide is Small ribosomal subunit protein uS13 (Borrelia garinii subsp. bavariensis (strain ATCC BAA-2496 / DSM 23469 / PBi) (Borreliella bavariensis)).